The following is a 189-amino-acid chain: UPF0301 protein PSEEN5058 (189 aa).

This sequence belongs to the UPF0301 (AlgH) family.

In Pseudomonas entomophila (strain L48), this protein is UPF0301 protein PSEEN5058.